The chain runs to 126 residues: MNLIKQLEQEQFDKLSAGKDIPEFGPGDTVIVNVKVVEGDRTRVQAYEGVCIGRSGGGLNESFTVRKISYGEGVERVFPVMSPMIDSIKVVRRGKVRRAKLYYLRNLRGKSARIVEKQDRQAAVGE.

This sequence belongs to the bacterial ribosomal protein bL19 family.

This protein is located at the 30S-50S ribosomal subunit interface and may play a role in the structure and function of the aminoacyl-tRNA binding site. This is Large ribosomal subunit protein bL19 from Bradyrhizobium diazoefficiens (strain JCM 10833 / BCRC 13528 / IAM 13628 / NBRC 14792 / USDA 110).